Consider the following 194-residue polypeptide: Crossover junction endodeoxyribonuclease RuvC (194 aa).

Catalysis depends on residues Asp-8, Glu-72, and Asp-144. Positions 8, 72, and 144 each coordinate Mg(2+).

This sequence belongs to the RuvC family. Homodimer which binds Holliday junction (HJ) DNA. The HJ becomes 2-fold symmetrical on binding to RuvC with unstacked arms; it has a different conformation from HJ DNA in complex with RuvA. In the full resolvosome a probable DNA-RuvA(4)-RuvB(12)-RuvC(2) complex forms which resolves the HJ. Mg(2+) serves as cofactor.

The protein resides in the cytoplasm. It catalyses the reaction Endonucleolytic cleavage at a junction such as a reciprocal single-stranded crossover between two homologous DNA duplexes (Holliday junction).. Its function is as follows. The RuvA-RuvB-RuvC complex processes Holliday junction (HJ) DNA during genetic recombination and DNA repair. Endonuclease that resolves HJ intermediates. Cleaves cruciform DNA by making single-stranded nicks across the HJ at symmetrical positions within the homologous arms, yielding a 5'-phosphate and a 3'-hydroxyl group; requires a central core of homology in the junction. The consensus cleavage sequence is 5'-(A/T)TT(C/G)-3'. Cleavage occurs on the 3'-side of the TT dinucleotide at the point of strand exchange. HJ branch migration catalyzed by RuvA-RuvB allows RuvC to scan DNA until it finds its consensus sequence, where it cleaves and resolves the cruciform DNA. This chain is Crossover junction endodeoxyribonuclease RuvC, found in Psychrobacter cryohalolentis (strain ATCC BAA-1226 / DSM 17306 / VKM B-2378 / K5).